Here is a 378-residue protein sequence, read N- to C-terminus: Ribosomal RNA large subunit methyltransferase G (378 aa).

The protein belongs to the methyltransferase superfamily. RlmG family.

It localises to the cytoplasm. It carries out the reaction guanosine(1835) in 23S rRNA + S-adenosyl-L-methionine = N(2)-methylguanosine(1835) in 23S rRNA + S-adenosyl-L-homocysteine + H(+). Its function is as follows. Specifically methylates the guanine in position 1835 (m2G1835) of 23S rRNA. This Escherichia coli O139:H28 (strain E24377A / ETEC) protein is Ribosomal RNA large subunit methyltransferase G.